The chain runs to 205 residues: Non-structural protein NS3 (205 aa).

The segment at G177 to G205 is disordered. Residues A196–G205 are compositionally biased toward gly residues.

It belongs to the orbivirus NS3 family.

Its function is as follows. May play a role in the release of virions from infected cells. The chain is Non-structural protein NS3 (Segment-10) from Broadhaven virus (BRD).